Consider the following 322-residue polypeptide: 4-hydroxythreonine-4-phosphate dehydrogenase (322 aa).

H126 and T127 together coordinate substrate. A divalent metal cation-binding residues include H160, H205, and H260. Substrate is bound by residues K268, N277, and R286.

This sequence belongs to the PdxA family. In terms of assembly, homodimer. The cofactor is Zn(2+). Mg(2+) serves as cofactor. Co(2+) is required as a cofactor.

The protein resides in the cytoplasm. The enzyme catalyses 4-(phosphooxy)-L-threonine + NAD(+) = 3-amino-2-oxopropyl phosphate + CO2 + NADH. It functions in the pathway cofactor biosynthesis; pyridoxine 5'-phosphate biosynthesis; pyridoxine 5'-phosphate from D-erythrose 4-phosphate: step 4/5. Its function is as follows. Catalyzes the NAD(P)-dependent oxidation of 4-(phosphooxy)-L-threonine (HTP) into 2-amino-3-oxo-4-(phosphooxy)butyric acid which spontaneously decarboxylates to form 3-amino-2-oxopropyl phosphate (AHAP). The sequence is that of 4-hydroxythreonine-4-phosphate dehydrogenase from Paracoccus denitrificans (strain Pd 1222).